Reading from the N-terminus, the 623-residue chain is Ciliated left-right organizer metallopeptidase (623 aa).

A signal peptide spans 1-20 (MSFLLCIGILLLPWFPCVCG). Residues 21-578 (KCIFDQIQRS…LFLVSEAKIS (558 aa)) lie on the Extracellular side of the membrane. Residue histidine 249 coordinates Zn(2+). Residue glutamate 250 is part of the active site. Zn(2+) contacts are provided by histidine 253 and histidine 326. The chain crosses the membrane as a helical span at residues 579–599 (LAAVLSLMAVFALLSAAVLLY). The Cytoplasmic portion of the chain corresponds to 600-623 (RKNLSVRVHAASYRTPLPHILYRN).

Belongs to the peptidase M8 family. Zn(2+) serves as cofactor. Expressed specifically in dorsal forerunner cells (DFCs) that form a ciliated Kupffer's vesicle later.

The protein localises to the membrane. Plays an essential role for patterning the left-right axis. Requires solely on the left side, downstream of the leftward flow, but upstream of dand5, a nodal inhibitor involved in left-right patterning. This is Ciliated left-right organizer metallopeptidase (cirop) from Danio rerio (Zebrafish).